A 218-amino-acid polypeptide reads, in one-letter code: GTP cyclohydrolase 1 (218 aa).

Cys-109, His-112, and Cys-180 together coordinate Zn(2+).

Belongs to the GTP cyclohydrolase I family. In terms of assembly, toroid-shaped homodecamer, composed of two pentamers of five dimers.

The enzyme catalyses GTP + H2O = 7,8-dihydroneopterin 3'-triphosphate + formate + H(+). Its pathway is cofactor biosynthesis; 7,8-dihydroneopterin triphosphate biosynthesis; 7,8-dihydroneopterin triphosphate from GTP: step 1/1. This chain is GTP cyclohydrolase 1, found in Haemophilus ducreyi (strain 35000HP / ATCC 700724).